The chain runs to 429 residues: Cleavage stimulation factor subunit 50 (429 aa).

Residues 20 to 41 form a hydrophobic region; the sequence is LNALIVAHLRHHNLSQVASAVA. WD repeat units follow at residues 121–160, 174–213, 218–257, 264–303, 308–347, 351–392, and 396–429; these read EHKS…QMIS, DHAE…AKRA, QDTH…CFLP, GVSG…CVRS, HGKS…MVKE, AKRV…KVAK, and NHNG…KESV.

Homodimer. Belongs to the CSTF complex. Forms a complex with cleavage and polyadenylation specificity factor (CPSF) subunits CSTF64, PABN3, CPSF30, FIPS5 and CPSF100.

It localises to the nucleus. One of the multiple factors required for polyadenylation and 3'-end cleavage of pre-mRNAs. May be responsible for the interaction of CSTF with other factors to form a stable complex on the pre-mRNA. The protein is Cleavage stimulation factor subunit 50 of Arabidopsis thaliana (Mouse-ear cress).